The sequence spans 307 residues: Mitochondrial glycine transporter (307 aa).

Solcar repeat units lie at residues 8 to 87 (PRNS…MRSS), 115 to 199 (LTMY…SKQL), and 221 to 305 (TSTT…LVKR). Transmembrane regions (helical) follow at residues 14–39 (LIGGFFGGLTSAVALQPLDLLKTRIQ), 62–88 (GTLPSALRTSIGSALYLSCLNLMRSSL), 121–146 (LLTGAFARGLVGYITMPITVIKVRYE), 174–197 (GFGATCLRDAPYAGLYVLLYEKSK), 225–251 (VNTTSAVLSASLATTVTAPFDTIKTRM), and 280–298 (GLSMRLARKALSAGIAWGI).

The protein belongs to the mitochondrial carrier (TC 2.A.29) family. SLC25A38 subfamily.

It localises to the mitochondrion inner membrane. The enzyme catalyses glycine(in) = glycine(out). Its function is as follows. Mitochondrial glycine transporter that imports glycine into the mitochondrial matrix. Plays an important role in providing glycine for the first enzymatic step in heme biosynthesis, the condensation of glycine with succinyl-CoA to produce 5-aminolevulinate (ALA) in the mitochondrial matrix. This Saccharomyces cerevisiae (strain RM11-1a) (Baker's yeast) protein is Mitochondrial glycine transporter.